The chain runs to 214 residues: Thymidylate kinase (214 aa).

10–17 (GGEGAGKS) serves as a coordination point for ATP.

This sequence belongs to the thymidylate kinase family.

The enzyme catalyses dTMP + ATP = dTDP + ADP. Functionally, phosphorylation of dTMP to form dTDP in both de novo and salvage pathways of dTTP synthesis. This chain is Thymidylate kinase, found in Brucella abortus (strain S19).